Here is a 420-residue protein sequence, read N- to C-terminus: Glutamate dehydrogenase (420 aa).

Lys105 is a catalytic residue. Residue 220–226 participates in NAD(+) binding; that stretch reads GYGNAGY.

This sequence belongs to the Glu/Leu/Phe/Val dehydrogenases family. As to quaternary structure, homohexamer.

Its subcellular location is the cytoplasm. It catalyses the reaction L-glutamate + NAD(+) + H2O = 2-oxoglutarate + NH4(+) + NADH + H(+). It carries out the reaction L-glutamate + NADP(+) + H2O = 2-oxoglutarate + NH4(+) + NADPH + H(+). The polypeptide is Glutamate dehydrogenase (gdhA) (Pyrococcus endeavori).